A 207-amino-acid polypeptide reads, in one-letter code: Large ribosomal subunit protein uL4 (207 aa).

A disordered region spans residues 48-70; sequence KAQKTRSEVSGGGAKPWRQKGTG.

It belongs to the universal ribosomal protein uL4 family. Part of the 50S ribosomal subunit.

Functionally, one of the primary rRNA binding proteins, this protein initially binds near the 5'-end of the 23S rRNA. It is important during the early stages of 50S assembly. It makes multiple contacts with different domains of the 23S rRNA in the assembled 50S subunit and ribosome. In terms of biological role, forms part of the polypeptide exit tunnel. This Francisella philomiragia subsp. philomiragia (strain ATCC 25017 / CCUG 19701 / FSC 153 / O#319-036) protein is Large ribosomal subunit protein uL4.